Here is a 780-residue protein sequence, read N- to C-terminus: Dynamin-related protein 3B (780 aa).

An N-acetylserine modification is found at serine 2. A Dynamin-type G domain is found at 40-315; sequence TIALPQVAVV…LVQHIKALLP (276 aa). The G1 motif stretch occupies residues 50-57; sequence GSQSSGKS. A GTP-binding site is contributed by 50–57; that stretch reads GSQSSGKS. The G2 motif stretch occupies residues 76 to 78; the sequence is CTR. A G3 motif region spans residues 157–160; it reads DLPG. GTP is bound by residues 157–161 and 226–229; these read DLPGI and TKLD. The interval 226 to 229 is G4 motif; sequence TKLD. Positions 256–259 are G5 motif; that stretch reads VNRS. 2 disordered regions span residues 536 to 558 and 573 to 592; these read PVAR…QIKT and QAVP…STSW. Basic and acidic residues predominate over residues 539 to 548; the sequence is RPRDTVEPER. Positions 549 to 558 are enriched in polar residues; sequence TASSGSQIKT. The region spanning 654–745 is the GED domain; that stretch reads IEITKLLLKS…TLDELPLEAE (92 aa). Basic and acidic residues predominate over residues 753-770; the sequence is IGSEAKHEELPGTRRSRT. Positions 753–780 are disordered; that stretch reads IGSEAKHEELPGTRRSRTETNGNGRLHM. Over residues 771-780 the composition is skewed to polar residues; the sequence is ETNGNGRLHM.

The protein belongs to the TRAFAC class dynamin-like GTPase superfamily. Dynamin/Fzo/YdjA family. Interacts with ARC5 on peroxisomes and ELM1 on mitochondria.

It is found in the mitochondrion. Its subcellular location is the peroxisome. In terms of biological role, involved in the control of mitochondrial and peroxisomal division and morphology. In Arabidopsis thaliana (Mouse-ear cress), this protein is Dynamin-related protein 3B (DRP3B).